We begin with the raw amino-acid sequence, 144 residues long: Putative pre-16S rRNA nuclease (144 aa).

It belongs to the YqgF nuclease family.

The protein resides in the cytoplasm. Could be a nuclease involved in processing of the 5'-end of pre-16S rRNA. This is Putative pre-16S rRNA nuclease from Pseudomonas paraeruginosa (strain DSM 24068 / PA7) (Pseudomonas aeruginosa (strain PA7)).